Here is a 149-residue protein sequence, read N- to C-terminus: D-aminoacyl-tRNA deacylase (149 aa).

The Gly-cisPro motif, important for rejection of L-amino acids motif lies at 137–138 (GP).

This sequence belongs to the DTD family. In terms of assembly, homodimer.

Its subcellular location is the cytoplasm. It catalyses the reaction glycyl-tRNA(Ala) + H2O = tRNA(Ala) + glycine + H(+). It carries out the reaction a D-aminoacyl-tRNA + H2O = a tRNA + a D-alpha-amino acid + H(+). In terms of biological role, an aminoacyl-tRNA editing enzyme that deacylates mischarged D-aminoacyl-tRNAs. Also deacylates mischarged glycyl-tRNA(Ala), protecting cells against glycine mischarging by AlaRS. Acts via tRNA-based rather than protein-based catalysis; rejects L-amino acids rather than detecting D-amino acids in the active site. By recycling D-aminoacyl-tRNA to D-amino acids and free tRNA molecules, this enzyme counteracts the toxicity associated with the formation of D-aminoacyl-tRNA entities in vivo and helps enforce protein L-homochirality. The protein is D-aminoacyl-tRNA deacylase of Fervidobacterium nodosum (strain ATCC 35602 / DSM 5306 / Rt17-B1).